The following is a 32-amino-acid chain: Cytochrome b6-f complex subunit 7 (32 aa).

The chain crosses the membrane as a helical span at residues Ile5 to Leu25.

Belongs to the PetM family. As to quaternary structure, the 4 large subunits of the cytochrome b6-f complex are cytochrome b6, subunit IV (17 kDa polypeptide, PetD), cytochrome f and the Rieske protein, while the 4 small subunits are PetG, PetL, PetM and PetN. The complex functions as a dimer.

The protein resides in the cellular thylakoid membrane. Its function is as follows. Component of the cytochrome b6-f complex, which mediates electron transfer between photosystem II (PSII) and photosystem I (PSI), cyclic electron flow around PSI, and state transitions. The sequence is that of Cytochrome b6-f complex subunit 7 from Prochlorococcus marinus (strain SARG / CCMP1375 / SS120).